A 562-amino-acid chain; its full sequence is Phosphoglucomutase-1 (562 aa).

M1 carries the post-translational modification N-acetylmethionine. K16 carries the post-translational modification N6-acetyllysine. Residue R23 coordinates alpha-D-glucose 1,6-bisphosphate. Residue T115 is modified to Phosphothreonine. S117 provides a ligand contact to alpha-D-glucose 1,6-bisphosphate. S117 acts as the Phosphoserine intermediate in catalysis. S117 contributes to the Mg(2+) binding site. S117 and S134 each carry phosphoserine. T185 bears the Phosphothreonine mark. 3 positions are modified to phosphoserine: S201, S206, and S213. Residues D288, D290, and D292 each contribute to the Mg(2+) site. 2 residues coordinate alpha-D-glucose 1,6-bisphosphate: D292 and R293. K349 is modified (N6-acetyllysine). A Phosphotyrosine modification is found at Y353. Position 357 (T357) interacts with alpha-D-glucose 1,6-bisphosphate. At S369 the chain carries Phosphoserine. 3 residues coordinate alpha-D-glucose 1,6-bisphosphate: E376, S378, and K389. S378 carries the post-translational modification Phosphoserine. Residue K419 is modified to N6-succinyllysine. T467 carries the phosphothreonine; by PAK1 modification. Residues S477, S485, and S505 each carry the phosphoserine modification. Phosphothreonine is present on T507. Residues S509 and S541 each carry the phosphoserine modification.

Belongs to the phosphohexose mutase family. Monomer. Requires Mg(2+) as cofactor. In terms of processing, phosphorylation at Thr-467 by PAK1 significantly enhances enzymatic activity.

The protein resides in the cytoplasm. The catalysed reaction is alpha-D-glucose 1-phosphate = alpha-D-glucose 6-phosphate. It catalyses the reaction O-phospho-L-seryl-[protein] + alpha-D-glucose 1-phosphate = alpha-D-glucose 1,6-bisphosphate + L-seryl-[protein]. The enzyme catalyses alpha-D-glucose 1,6-bisphosphate + L-seryl-[protein] = O-phospho-L-seryl-[protein] + alpha-D-glucose 6-phosphate. Its activity is regulated as follows. Glucose-1,6-bisphosphate enhances phosphorylation of the active site Ser-117, and thereby increases enzyme activity. Functionally, catalyzes the reversible isomerization of alpha-D-glucose 1-phosphate to alpha-D-glucose 6-phosphate. The mechanism proceeds via the intermediate compound alpha-D-glucose 1,6-bisphosphate. This enzyme participates in both the breakdown and synthesis of glucose. This is Phosphoglucomutase-1 (PGM1) from Homo sapiens (Human).